Reading from the N-terminus, the 179-residue chain is uncharacterized protein (179 aa).

This is an uncharacterized protein from Mushroom bacilliform virus (isolate Australia/AUS LF-1) (MBV).